We begin with the raw amino-acid sequence, 313 residues long: NADH-ubiquinone oxidoreductase chain 1 (313 aa).

The next 8 membrane-spanning stretches (helical) occupy residues 2 to 22 (ILNF…IAFF), 71 to 91 (FIQI…WMIF), 103 to 123 (SIIF…FSGW), 138 to 158 (FAQV…LAII), 173 to 193 (TFPL…TVLA), 220 to 240 (WLFA…SFLT), 243 to 263 (LFLG…TMII), and 289 to 309 (SIIF…FICI).

This sequence belongs to the complex I subunit 1 family.

It is found in the mitochondrion inner membrane. The enzyme catalyses a ubiquinone + NADH + 5 H(+)(in) = a ubiquinol + NAD(+) + 4 H(+)(out). Functionally, core subunit of the mitochondrial membrane respiratory chain NADH dehydrogenase (Complex I) that is believed to belong to the minimal assembly required for catalysis. Complex I functions in the transfer of electrons from NADH to the respiratory chain. The immediate electron acceptor for the enzyme is believed to be ubiquinone. The sequence is that of NADH-ubiquinone oxidoreductase chain 1 (ND1) from Rhipicephalus sanguineus (Brown dog tick).